A 654-amino-acid chain; its full sequence is Pentatricopeptide repeat-containing protein At4g19191, mitochondrial (654 aa).

The N-terminal 65 residues, 1–65 (MSLIHRRLYR…PFVAKACARL (65 aa)), are a transit peptide targeting the mitochondrion. 13 PPR repeats span residues 86–116 (DVFVGTATVDMFVKCNSVDYAAKVFERMPER), 117–151 (DATTWNAMLSGFCQSGHTDKAFSLFREMRLNEITP), 152–186 (DSVTVMTLIQSASFEKSLKLLEAMHAVGIRLGVDV), 187–217 (QVTVANTWISTYGKCGDLDSAKLVFEAIDRG), 220–254 (TVVSWNSMFKAYSVFGEAFDAFGLYCLMLREEFKP), 255–289 (DLSTFINLAASCQNPETLTQGRLIHSHAIHLGTDQ), 290–320 (DIEAINTFISMYSKSEDTCSARLLFDIMTSR), 321–355 (TCVSWTVMISGYAEKGDMDEALALFHAMIKSGEKP), 356–390 (DLVTLLSLISGCGKFGSLETGKWIDARADIYGCKR), 392–422 (NVMICNALIDMYSKCGSIHEARDIFDNTPEK), 423–457 (TVVTWTTMIAGYALNGIFLEALKLFSKMIDLDYKP), 458–488 (NHITFLAVLQACAHSGSLEKGWEYFHIMKQV), and 494–524 (GLDHYSCMVDLLGRKGKLEEALELIRNMSAK). The interval 529–604 (IWGALLNACK…YPGESVIQVN (76 aa)) is type E motif. The tract at residues 605–635 (GKNHSFTVGEHGHVENEVIYFTLNGLSLFAK) is type E(+) motif.

The protein belongs to the PPR family. PCMP-E subfamily.

It localises to the mitochondrion. This chain is Pentatricopeptide repeat-containing protein At4g19191, mitochondrial (PCMP-E1), found in Arabidopsis thaliana (Mouse-ear cress).